The sequence spans 120 residues: Ribosome-binding factor A (120 aa).

This sequence belongs to the RbfA family. As to quaternary structure, monomer. Binds 30S ribosomal subunits, but not 50S ribosomal subunits or 70S ribosomes.

The protein localises to the cytoplasm. Its function is as follows. One of several proteins that assist in the late maturation steps of the functional core of the 30S ribosomal subunit. Associates with free 30S ribosomal subunits (but not with 30S subunits that are part of 70S ribosomes or polysomes). Required for efficient processing of 16S rRNA. May interact with the 5'-terminal helix region of 16S rRNA. In Clostridium botulinum (strain ATCC 19397 / Type A), this protein is Ribosome-binding factor A.